The chain runs to 159 residues: Developmental pluripotency-associated protein 3 (159 aa).

2 disordered regions span residues Met1 to Gln31 and Gly140 to Pro159. The span at Ile149–Pro159 shows a compositional bias: polar residues.

In terms of tissue distribution, low expression in testis, ovary and thymus. Expressed in embryonic stem and carcinoma cells. Highly expressed in testicular germ cell tumors.

Its subcellular location is the nucleus. The protein localises to the cytoplasm. Functionally, primordial germ cell (PGCs)-specific protein involved in epigenetic chromatin reprogramming in the zygote following fertilization. In zygotes, DNA demethylation occurs selectively in the paternal pronucleus before the first cell division, while the adjacent maternal pronucleus and certain paternally-imprinted loci are protected from this process. Participates in protection of DNA methylation in the maternal pronucleus by preventing conversion of 5mC to 5hmC: specifically recognizes and binds histone H3 dimethylated at 'Lys-9' (H3K9me2) on maternal genome, and protects maternal genome from TET3-mediated conversion to 5hmC and subsequent DNA demethylation. Does not bind paternal chromatin, which is mainly packed into protamine and does not contain much H3K9me2 mark. Also protects imprinted loci that are marked with H3K9me2 in mature sperm from DNA demethylation in early embryogenesis. May be important for the totipotent/pluripotent states continuing through preimplantation development. Also involved in chromatin condensation in oocytogenesis. This is Developmental pluripotency-associated protein 3 (DPPA3) from Homo sapiens (Human).